The following is a 215-amino-acid chain: MSLGILGRKLGMTQIFDEEGRAIPVTVVEAGPCPVTQVKSEATDGYTAVQLGFGTAREKVLTRPEVGHCKKAGLEAPVRHLREFRLPDSSQYTPGQQITVDLFAAGQLVDVVGTSIGKGFAGGQKRHHFGRGPMAHGSKNHRAPGSIGAGTTPGRVFPGKRMPGRMGNERVTVRKLTVVRVIPERNVILIQGGLPGVEGGLLMISPAKSVGRAKG.

A disordered region spans residues 134–166 (MAHGSKNHRAPGSIGAGTTPGRVFPGKRMPGRM).

This sequence belongs to the universal ribosomal protein uL3 family. In terms of assembly, part of the 50S ribosomal subunit. Forms a cluster with proteins L14 and L19.

One of the primary rRNA binding proteins, it binds directly near the 3'-end of the 23S rRNA, where it nucleates assembly of the 50S subunit. The chain is Large ribosomal subunit protein uL3 from Gloeobacter violaceus (strain ATCC 29082 / PCC 7421).